Here is a 353-residue protein sequence, read N- to C-terminus: sn-glycerol-3-phosphate import ATP-binding protein UgpC 3 (353 aa).

In terms of domain architecture, ABC transporter spans 4-235 (IALKDVRKVY…PATTFVATFI (232 aa)). ATP is bound at residue 37–44 (GPSGCGKS).

Belongs to the ABC transporter superfamily. sn-glycerol-3-phosphate importer (TC 3.A.1.1.3) family. In terms of assembly, the complex is composed of two ATP-binding proteins (UgpC), two transmembrane proteins (UgpA and UgpE) and a solute-binding protein (UgpB).

Its subcellular location is the cell inner membrane. It catalyses the reaction sn-glycerol 3-phosphate(out) + ATP + H2O = sn-glycerol 3-phosphate(in) + ADP + phosphate + H(+). In terms of biological role, part of the ABC transporter complex UgpBAEC involved in sn-glycerol-3-phosphate (G3P) import. Responsible for energy coupling to the transport system. This chain is sn-glycerol-3-phosphate import ATP-binding protein UgpC 3, found in Agrobacterium fabrum (strain C58 / ATCC 33970) (Agrobacterium tumefaciens (strain C58)).